Here is a 72-residue protein sequence, read N- to C-terminus: SRY-related protein MG44 (72 aa).

Residues 1 to 69 (VKRPMNAFMV…KHMADYPNYK (69 aa)) constitute a DNA-binding region (HMG box).

The protein localises to the nucleus. This Tarentola mauritanica (Common wall gecko) protein is SRY-related protein MG44.